Reading from the N-terminus, the 333-residue chain is Adenosine deaminase (333 aa).

Residues His12 and His14 each coordinate Zn(2+). Positions 14, 16, and 170 each coordinate substrate. A Zn(2+)-binding site is contributed by His197. Glu200 (proton donor) is an active-site residue. Asp278 lines the Zn(2+) pocket. Asp279 lines the substrate pocket.

Belongs to the metallo-dependent hydrolases superfamily. Adenosine and AMP deaminases family. Adenosine deaminase subfamily. It depends on Zn(2+) as a cofactor.

The enzyme catalyses adenosine + H2O + H(+) = inosine + NH4(+). It carries out the reaction 2'-deoxyadenosine + H2O + H(+) = 2'-deoxyinosine + NH4(+). Functionally, catalyzes the hydrolytic deamination of adenosine and 2-deoxyadenosine. This is Adenosine deaminase from Shigella flexneri serotype 5b (strain 8401).